Consider the following 271-residue polypeptide: Indole-3-glycerol phosphate synthase (271 aa).

It belongs to the TrpC family.

The enzyme catalyses 1-(2-carboxyphenylamino)-1-deoxy-D-ribulose 5-phosphate + H(+) = (1S,2R)-1-C-(indol-3-yl)glycerol 3-phosphate + CO2 + H2O. Its pathway is amino-acid biosynthesis; L-tryptophan biosynthesis; L-tryptophan from chorismate: step 4/5. This chain is Indole-3-glycerol phosphate synthase, found in Haloarcula marismortui (strain ATCC 43049 / DSM 3752 / JCM 8966 / VKM B-1809) (Halobacterium marismortui).